The chain runs to 397 residues: UDP-GlcNAc:betaGal beta-1,3-N-acetylglucosaminyltransferase 7 (397 aa).

At 1-6 (MSLWKK) the chain is on the cytoplasmic side. Residues 7-26 (TLYKSVCLALALLVAVTVFQ) traverse the membrane as a helical; Signal-anchor for type II membrane protein segment. At 27–397 (RSVTPGQFLQ…LTCSLKFQVL (371 aa)) the chain is on the lumenal side. Residues Asn84, Asn90, Asn210, and Asn387 are each glycosylated (N-linked (GlcNAc...) asparagine).

This sequence belongs to the glycosyltransferase 31 family.

It is found in the golgi apparatus membrane. The protein operates within protein modification; protein glycosylation. In terms of biological role, N-acetyl glucosamine (GlcNAc) transferase that catalyzes the transfer of GlcNAc via a beta1-&gt;3 linkage from UDP-GlcNAc to the non-reducing terminal galactose (Gal) in the linearly growing chain of N- and O-linked keratan sulfate proteoglycans. Cooperates with B4GALT4 galactosyltransferase and CHST6 and CHST1 sulfotransferases to construct and elongate mono- and disulfated disaccharide units [-&gt;3Galbeta1-&gt;4(6-sulfoGlcNAcbeta)1-&gt;] and [-&gt;3(6-sulfoGalbeta)1-&gt;4(6-sulfoGlcNAcbeta)1-&gt;] within keratan sulfate polymer. Involved in biosynthesis of N-linked keratan sulfate proteoglycans in cornea, with an impact on proteoglycan fibril organization and corneal transparency. May play a role in the maintenance of tissue architecture by suppressing cellular motility and invasion. The protein is UDP-GlcNAc:betaGal beta-1,3-N-acetylglucosaminyltransferase 7 (B3gnt7) of Rattus norvegicus (Rat).